A 325-amino-acid chain; its full sequence is Gibberellin 20-oxidase-like protein (325 aa).

The 115-residue stretch at 152-266 folds into the Fe2OG dioxygenase domain; sequence CHGYFRINNY…RFSLAFFWCF (115 aa). The Fe cation site is built by H186, D188, and H244. Position 257 (R257) interacts with 2-oxoglutarate.

Belongs to the iron/ascorbate-dependent oxidoreductase family. GA20OX subfamily. Fe(2+) is required as a cofactor. Highly expressed in elongation zone of lateral roots.

Negative regulator of root hair growth. This is Gibberellin 20-oxidase-like protein from Arabidopsis thaliana (Mouse-ear cress).